The sequence spans 536 residues: MAFMGTSSAVHPAILVILDGWGYREQTDGNAVAAAKTPIFDALKASYPFTLIHTSGKAVGLPRGQMGNSEVGHLNLGAGRMVPQELVRISDAVEEGTLLSNPELLRLCRTVRERGGKLHGVGLVSDGGVHSHIEHLFGLLDLAKREGFETLFIHGMSDGRDTPPTSGVAYFEKLEARIAETGFGTIATLGGRYFGMDRDRRWDRTEAMYRVMTETGPGTGKRASETLRESHAAGKTDEFVLPVRLAAGAVEPGDGVIYFNFRPDRARQLTRAFVQADFDGFVRPYLDPLAFLTFTQYDATLPVAVAFAPQSLDNLLGQVIAHHGLRQFRIAETEKYAHVTYFFNGGIETPLPGEERSMIQSPLVPTYDLKPEMAAREVTDHAVAAIETRQYSLIVINYANPDMVGHTGNFDATVKAVETVDACIGRLVEACVRAGGTMLLTADHGNAELMWDEQGNPWTAHTTNPVPFILIESEGLKIPGWGTDVQLRAGGSLGDIAPTILEILGLPQPAEMTGRSLLGESEIEIRTPRSPLRVGL.

Asp-19 and Ser-69 together coordinate Mn(2+). Catalysis depends on Ser-69, which acts as the Phosphoserine intermediate. Residues His-130, 160–161 (RD), Arg-192, Arg-198, 262–265 (RPDR), and Lys-335 each bind substrate. 5 residues coordinate Mn(2+): Asp-402, His-406, Asp-443, His-444, and His-461.

This sequence belongs to the BPG-independent phosphoglycerate mutase family. In terms of assembly, monomer. Mn(2+) serves as cofactor.

It carries out the reaction (2R)-2-phosphoglycerate = (2R)-3-phosphoglycerate. Its pathway is carbohydrate degradation; glycolysis; pyruvate from D-glyceraldehyde 3-phosphate: step 3/5. Functionally, catalyzes the interconversion of 2-phosphoglycerate and 3-phosphoglycerate. In Gloeobacter violaceus (strain ATCC 29082 / PCC 7421), this protein is 2,3-bisphosphoglycerate-independent phosphoglycerate mutase.